Reading from the N-terminus, the 90-residue chain is Evasin P458 (90 aa).

The first 24 residues, 1–24, serve as a signal peptide directing secretion; sequence MEVKTFAFLQIAVLIAFSLHSASA. 3 disulfides stabilise this stretch: cysteine 44/cysteine 63, cysteine 48/cysteine 65, and cysteine 59/cysteine 76. An N-linked (GlcNAc...) asparagine glycan is attached at asparagine 47.

It localises to the secreted. In terms of biological role, salivary chemokine-binding protein which binds to host chemokines CXCL1, CXCL2, CXCL3, CXCL5, CXCL6 and CXCL13. The polypeptide is Evasin P458 (Ixodes ricinus (Common tick)).